A 208-amino-acid polypeptide reads, in one-letter code: Ubiquitin-conjugating enzyme E2 S (208 aa).

Residues 14–160 (QTIRQVMREL…ARMMTEIHAQ (147 aa)) enclose the UBC core domain. The active-site Glycyl thioester intermediate is C98. Residues 159-208 (AQPAKCASTTSDAKDDDGPSTKKHAGLDKKLQDKKKEKLLKEKKRMLKRL) form a disordered region. Residues 170 to 198 (DAKDDDGPSTKKHAGLDKKLQDKKKEKLL) are compositionally biased toward basic and acidic residues. Over residues 199–208 (KEKKRMLKRL) the composition is skewed to basic residues.

Belongs to the ubiquitin-conjugating enzyme family.

The catalysed reaction is S-ubiquitinyl-[E1 ubiquitin-activating enzyme]-L-cysteine + [E2 ubiquitin-conjugating enzyme]-L-cysteine = [E1 ubiquitin-activating enzyme]-L-cysteine + S-ubiquitinyl-[E2 ubiquitin-conjugating enzyme]-L-cysteine.. It participates in protein modification; protein ubiquitination. In terms of biological role, catalyzes the covalent attachment of ubiquitin to other proteins. Acts as an essential factor of the anaphase promoting complex/cyclosome (APC/C), a cell cycle-regulated ubiquitin ligase that controls progression through mitosis. Acts by specifically elongating polyubiquitin chains initiated by the E2 enzyme vih/UbcH10 on APC/C substrates, enhancing the degradation of APC/C substrates by the proteasome and promoting mitotic exit. This is Ubiquitin-conjugating enzyme E2 S from Drosophila willistoni (Fruit fly).